A 232-amino-acid polypeptide reads, in one-letter code: Fibrillarin-like rRNA/tRNA 2'-O-methyltransferase (232 aa).

S-adenosyl-L-methionine contacts are provided by residues 89–90 (TT), 108–109 (EF), 133–134 (DA), and 153–156 (DIAQ).

The protein belongs to the methyltransferase superfamily. Fibrillarin family. As to quaternary structure, interacts with nop5. Component of box C/D small ribonucleoprotein (sRNP) particles that contain rpl7ae, FlpA and nop5, plus a guide RNA.

Involved in pre-rRNA and tRNA processing. Utilizes the methyl donor S-adenosyl-L-methionine to catalyze the site-specific 2'-hydroxyl methylation of ribose moieties in rRNA and tRNA. Site specificity is provided by a guide RNA that base pairs with the substrate. Methylation occurs at a characteristic distance from the sequence involved in base pairing with the guide RNA. The protein is Fibrillarin-like rRNA/tRNA 2'-O-methyltransferase of Methanopyrus kandleri (strain AV19 / DSM 6324 / JCM 9639 / NBRC 100938).